A 257-amino-acid polypeptide reads, in one-letter code: Type III pantothenate kinase (257 aa).

11–18 contributes to the ATP binding site; it reads DSGNTAIK. Residues Y96 and 103-106 each bind substrate; that span reads GCDR. The active-site Proton acceptor is the D105. Residue D125 coordinates K(+). T128 is an ATP binding site. T179 is a binding site for substrate.

Belongs to the type III pantothenate kinase family. Homodimer. It depends on NH4(+) as a cofactor. The cofactor is K(+).

It localises to the cytoplasm. The catalysed reaction is (R)-pantothenate + ATP = (R)-4'-phosphopantothenate + ADP + H(+). The protein operates within cofactor biosynthesis; coenzyme A biosynthesis; CoA from (R)-pantothenate: step 1/5. Functionally, catalyzes the phosphorylation of pantothenate (Pan), the first step in CoA biosynthesis. The protein is Type III pantothenate kinase of Nitrosomonas eutropha (strain DSM 101675 / C91 / Nm57).